The sequence spans 155 residues: Small ribosomal subunit protein bS16 (155 aa).

Positions 100 to 155 are disordered; the sequence is EAGIPDPAPSTEEPAAVCEASAEMAGQPGEVEPAGAAAEPNSQEPEPEEEKPQVEA. Residues 124 to 143 show a composition bias toward low complexity; sequence AGQPGEVEPAGAAAEPNSQE.

The protein belongs to the bacterial ribosomal protein bS16 family.

This chain is Small ribosomal subunit protein bS16, found in Synechococcus sp. (strain JA-3-3Ab) (Cyanobacteria bacterium Yellowstone A-Prime).